Reading from the N-terminus, the 343-residue chain is tRNA N6-adenosine threonylcarbamoyltransferase (343 aa).

The Fe cation site is built by histidine 120 and histidine 124. Substrate contacts are provided by residues 142–146 (VVSGG), aspartate 175, glycine 188, aspartate 192, and asparagine 281. A Fe cation-binding site is contributed by aspartate 310.

Belongs to the KAE1 / TsaD family. Fe(2+) is required as a cofactor.

It localises to the cytoplasm. It catalyses the reaction L-threonylcarbamoyladenylate + adenosine(37) in tRNA = N(6)-L-threonylcarbamoyladenosine(37) in tRNA + AMP + H(+). Functionally, required for the formation of a threonylcarbamoyl group on adenosine at position 37 (t(6)A37) in tRNAs that read codons beginning with adenine. Is involved in the transfer of the threonylcarbamoyl moiety of threonylcarbamoyl-AMP (TC-AMP) to the N6 group of A37, together with TsaE and TsaB. TsaD likely plays a direct catalytic role in this reaction. In Bacillus anthracis, this protein is tRNA N6-adenosine threonylcarbamoyltransferase.